The primary structure comprises 266 residues: rRNA adenine N-6-methyltransferase (266 aa).

S-adenosyl-L-methionine-binding residues include H14, T16, G41, E62, D87, and N103.

It belongs to the class I-like SAM-binding methyltransferase superfamily. rRNA adenine N(6)-methyltransferase family.

In terms of biological role, involved in erythromycin resistance. The polypeptide is rRNA adenine N-6-methyltransferase (ermF) (Bacteroides fragilis).